The following is a 126-amino-acid chain: MSKDKNPRRVADNEAMAKLRMLKTSPQKLNLVAGLIRGQKVEKALTDLTFSKKRIAVDVKKCLQSAIANAENNHGLDVDELIVAEAWVGKNLVMKRGRPRARGRFGKILKPFSELTITVRQVEETS.

This sequence belongs to the universal ribosomal protein uL22 family. As to quaternary structure, part of the 50S ribosomal subunit.

This protein binds specifically to 23S rRNA; its binding is stimulated by other ribosomal proteins, e.g. L4, L17, and L20. It is important during the early stages of 50S assembly. It makes multiple contacts with different domains of the 23S rRNA in the assembled 50S subunit and ribosome. In terms of biological role, the globular domain of the protein is located near the polypeptide exit tunnel on the outside of the subunit, while an extended beta-hairpin is found that lines the wall of the exit tunnel in the center of the 70S ribosome. This chain is Large ribosomal subunit protein uL22, found in Jannaschia sp. (strain CCS1).